The sequence spans 534 residues: Bifunctional pantoate ligase/cytidylate kinase (534 aa).

The pantoate--beta-alanine ligase stretch occupies residues 1–302 (MRLLTTVAAL…LGSTRLIDNT (302 aa)). 48-55 (MGSLHQGH) is a binding site for ATP. His55 (proton donor) is an active-site residue. Gln79 is a (R)-pantoate binding site. Gln79 serves as a coordination point for beta-alanine. 172–175 (GQKD) is a binding site for ATP. Position 178 (Gln178) interacts with (R)-pantoate. Residues Val201 and 209-212 (CSSR) each bind ATP. The interval 303–534 (ILRDRQPIIA…DYYQQRLSQW (232 aa)) is cytidylate kinase.

It in the N-terminal section; belongs to the pantothenate synthetase family. This sequence in the C-terminal section; belongs to the cytidylate kinase family. Type 1 subfamily.

It is found in the cytoplasm. It carries out the reaction (R)-pantoate + beta-alanine + ATP = (R)-pantothenate + AMP + diphosphate + H(+). The enzyme catalyses CMP + ATP = CDP + ADP. The catalysed reaction is dCMP + ATP = dCDP + ADP. The protein operates within cofactor biosynthesis; (R)-pantothenate biosynthesis; (R)-pantothenate from (R)-pantoate and beta-alanine: step 1/1. In terms of biological role, catalyzes the condensation of pantoate with beta-alanine in an ATP-dependent reaction via a pantoyl-adenylate intermediate. Functionally, catalyzes the transfer of a phosphate group from ATP to either CMP or dCMP to form CDP or dCDP and ADP, respectively. This is Bifunctional pantoate ligase/cytidylate kinase from Nostoc sp. (strain PCC 7120 / SAG 25.82 / UTEX 2576).